Consider the following 240-residue polypeptide: Putative N-acetylmannosamine-6-phosphate 2-epimerase (240 aa).

The protein belongs to the NanE family.

It catalyses the reaction an N-acyl-D-glucosamine 6-phosphate = an N-acyl-D-mannosamine 6-phosphate. It functions in the pathway amino-sugar metabolism; N-acetylneuraminate degradation; D-fructose 6-phosphate from N-acetylneuraminate: step 3/5. In terms of biological role, converts N-acetylmannosamine-6-phosphate (ManNAc-6-P) to N-acetylglucosamine-6-phosphate (GlcNAc-6-P). This Vibrio cholerae serotype O1 (strain ATCC 39315 / El Tor Inaba N16961) protein is Putative N-acetylmannosamine-6-phosphate 2-epimerase.